The primary structure comprises 406 residues: L-cysteine:1D-myo-inositol 2-amino-2-deoxy-alpha-D-glucopyranoside ligase (406 aa).

Cys45 contacts Zn(2+). Residues 45 to 48, Thr60, and 83 to 85 contribute to the L-cysteinyl-5'-AMP site; these read CGIT and NIT. Positions 47-57 match the 'HIGH' region motif; it reads ITPYDATHMGH. The 'ERGGDP' region signature appears at 185-190; that stretch reads ERGGDP. Trp225 is an L-cysteinyl-5'-AMP binding site. Zn(2+) is bound at residue Cys229. An L-cysteinyl-5'-AMP-binding site is contributed by 247–249; it reads GSD. Residue His254 coordinates Zn(2+). Residue Val281 participates in L-cysteinyl-5'-AMP binding. The 'KMSKS' region motif lies at 287 to 291; sequence KMSKS.

Belongs to the class-I aminoacyl-tRNA synthetase family. MshC subfamily. Monomer. Zn(2+) is required as a cofactor.

It catalyses the reaction 1D-myo-inositol 2-amino-2-deoxy-alpha-D-glucopyranoside + L-cysteine + ATP = 1D-myo-inositol 2-(L-cysteinylamino)-2-deoxy-alpha-D-glucopyranoside + AMP + diphosphate + H(+). In terms of biological role, catalyzes the ATP-dependent condensation of GlcN-Ins and L-cysteine to form L-Cys-GlcN-Ins. In Kribbella flavida (strain DSM 17836 / JCM 10339 / NBRC 14399), this protein is L-cysteine:1D-myo-inositol 2-amino-2-deoxy-alpha-D-glucopyranoside ligase.